The chain runs to 104 residues: UPF0145 protein STH1265 (104 aa).

Belongs to the UPF0145 family.

In Symbiobacterium thermophilum (strain DSM 24528 / JCM 14929 / IAM 14863 / T), this protein is UPF0145 protein STH1265.